The sequence spans 665 residues: Methionine--tRNA ligase (665 aa).

A 'HIGH' region motif is present at residues tyrosine 12–serine 22. A 'KMSKS' region motif is present at residues lysine 308–serine 312. Lysine 311 is an ATP binding site. The tRNA-binding domain maps to threonine 562–glycine 665.

Belongs to the class-I aminoacyl-tRNA synthetase family. MetG type 2B subfamily. As to quaternary structure, homodimer.

It is found in the cytoplasm. The enzyme catalyses tRNA(Met) + L-methionine + ATP = L-methionyl-tRNA(Met) + AMP + diphosphate. In terms of biological role, is required not only for elongation of protein synthesis but also for the initiation of all mRNA translation through initiator tRNA(fMet) aminoacylation. In Streptococcus pyogenes serotype M18 (strain MGAS8232), this protein is Methionine--tRNA ligase (metG).